We begin with the raw amino-acid sequence, 271 residues long: Formamidopyrimidine-DNA glycosylase (271 aa).

The active-site Schiff-base intermediate with DNA is the proline 2. Glutamate 3 acts as the Proton donor in catalysis. Lysine 57 (proton donor; for beta-elimination activity) is an active-site residue. DNA is bound by residues histidine 90, arginine 109, and lysine 151. The FPG-type zinc finger occupies 236–270 (HVYGRGGESCTQCGNLLSEIKLGQRATVFCGLCQT). Arginine 260 functions as the Proton donor; for delta-elimination activity in the catalytic mechanism.

The protein belongs to the FPG family. In terms of assembly, monomer. Requires Zn(2+) as cofactor.

It catalyses the reaction Hydrolysis of DNA containing ring-opened 7-methylguanine residues, releasing 2,6-diamino-4-hydroxy-5-(N-methyl)formamidopyrimidine.. It carries out the reaction 2'-deoxyribonucleotide-(2'-deoxyribose 5'-phosphate)-2'-deoxyribonucleotide-DNA = a 3'-end 2'-deoxyribonucleotide-(2,3-dehydro-2,3-deoxyribose 5'-phosphate)-DNA + a 5'-end 5'-phospho-2'-deoxyribonucleoside-DNA + H(+). In terms of biological role, involved in base excision repair of DNA damaged by oxidation or by mutagenic agents. Acts as a DNA glycosylase that recognizes and removes damaged bases. Has a preference for oxidized purines, such as 7,8-dihydro-8-oxoguanine (8-oxoG). Has AP (apurinic/apyrimidinic) lyase activity and introduces nicks in the DNA strand. Cleaves the DNA backbone by beta-delta elimination to generate a single-strand break at the site of the removed base with both 3'- and 5'-phosphates. The protein is Formamidopyrimidine-DNA glycosylase of Shewanella woodyi (strain ATCC 51908 / MS32).